We begin with the raw amino-acid sequence, 96 residues long: uncharacterized protein (96 aa).

A signal peptide spans 1–15 (MRLFILLVALFVICA).

This is an uncharacterized protein from Caenorhabditis elegans.